Here is a 172-residue protein sequence, read N- to C-terminus: Large ribosomal subunit protein uL10 (172 aa).

It belongs to the universal ribosomal protein uL10 family. In terms of assembly, part of the ribosomal stalk of the 50S ribosomal subunit. The N-terminus interacts with L11 and the large rRNA to form the base of the stalk. The C-terminus forms an elongated spine to which L12 dimers bind in a sequential fashion forming a multimeric L10(L12)X complex.

Forms part of the ribosomal stalk, playing a central role in the interaction of the ribosome with GTP-bound translation factors. This is Large ribosomal subunit protein uL10 from Rhizobium etli (strain ATCC 51251 / DSM 11541 / JCM 21823 / NBRC 15573 / CFN 42).